A 312-amino-acid chain; its full sequence is MIRNMKVLVIGAGNAGRPAARLLNHLNNRVLVNDVRELHELPLKAQKRIAEMEDEGVMFRFGGHSMEDILWADAVFISPNIPQDAPVRKMVREAGDLVHITTSDIGRTLNELIGLPMVGVAGTDGKTTTTNMIDHILSSRYRTVSFSSLQDSLVIEGLVELVVNGDIDDRDLAVFELPHGTIRMAEGLELSAGVVTNLTPDHMDEFSNYDEYIERNFSIKDLMAPGGVLALCGDDPVISSLLDDLEVENVVYGVGERRTVEFMGRRFMLSQYPGQGLRYRAEGTCRIHLHPECIRDTDSHLQHLRSPQLQET.

112 to 118 (LIGLPMV) is a binding site for ATP.

The protein belongs to the MurCDEF family.

This is an uncharacterized protein from Methanothermobacter thermautotrophicus (strain ATCC 29096 / DSM 1053 / JCM 10044 / NBRC 100330 / Delta H) (Methanobacterium thermoautotrophicum).